The sequence spans 364 residues: Protein Wnt-16 (364 aa).

The N-terminal stretch at 1 to 29 is a signal peptide; it reads MDRAALLALPSLCALWAAVLSLLPCGTQG. Disulfide bonds link Cys81/Cys92, Cys138/Cys146, and Cys148/Cys167. Asn142 is a glycosylation site (N-linked (GlcNAc...) asparagine). N-linked (GlcNAc...) asparagine glycosylation occurs at Asn188. 8 cysteine pairs are disulfide-bonded: Cys220–Cys234, Cys222–Cys229, Cys293–Cys324, Cys309–Cys319, Cys323–Cys363, Cys339–Cys354, Cys341–Cys351, and Cys346–Cys347. Ser226 carries the O-palmitoleoyl serine; by PORCN lipid modification. Residue Asn310 is glycosylated (N-linked (GlcNAc...) asparagine).

Belongs to the Wnt family. Palmitoleoylation is required for efficient binding to frizzled receptors. Depalmitoleoylation leads to Wnt signaling pathway inhibition.

The protein localises to the secreted. It localises to the extracellular space. Its subcellular location is the extracellular matrix. Functionally, ligand for members of the frizzled family of seven transmembrane receptors. Probable developmental protein. May be a signaling molecule which affects the development of discrete regions of tissues. Is likely to signal over only few cell diameters. This Mus musculus (Mouse) protein is Protein Wnt-16 (Wnt16).